The primary structure comprises 167 residues: Crossover junction endodeoxyribonuclease RuvC (167 aa).

Residues D7, E67, and D139 contribute to the active site. D7, E67, and D139 together coordinate Mg(2+).

Belongs to the RuvC family. Homodimer which binds Holliday junction (HJ) DNA. The HJ becomes 2-fold symmetrical on binding to RuvC with unstacked arms; it has a different conformation from HJ DNA in complex with RuvA. In the full resolvosome a probable DNA-RuvA(4)-RuvB(12)-RuvC(2) complex forms which resolves the HJ. Mg(2+) serves as cofactor.

It is found in the cytoplasm. The enzyme catalyses Endonucleolytic cleavage at a junction such as a reciprocal single-stranded crossover between two homologous DNA duplexes (Holliday junction).. In terms of biological role, the RuvA-RuvB-RuvC complex processes Holliday junction (HJ) DNA during genetic recombination and DNA repair. Endonuclease that resolves HJ intermediates. Cleaves cruciform DNA by making single-stranded nicks across the HJ at symmetrical positions within the homologous arms, yielding a 5'-phosphate and a 3'-hydroxyl group; requires a central core of homology in the junction. The consensus cleavage sequence is 5'-(A/T)TT(C/G)-3'. Cleavage occurs on the 3'-side of the TT dinucleotide at the point of strand exchange. HJ branch migration catalyzed by RuvA-RuvB allows RuvC to scan DNA until it finds its consensus sequence, where it cleaves and resolves the cruciform DNA. This is Crossover junction endodeoxyribonuclease RuvC from Zymomonas mobilis subsp. mobilis (strain ATCC 31821 / ZM4 / CP4).